A 463-amino-acid polypeptide reads, in one-letter code: MIEQIGADSKSAENKQERKLYIETYGCQMNVADSEVVASVMQMDGYNLTDNVDEADTILVNTCSVRDNAEQKVLNRLAYYHSLRKKRRASSRLVIGVLGCMAERVKEELIREHHVDVVAGPDSYLDLPNLVGAAEQGEKAINVELSTQETYKDVMPLKMGGVHINGFVSIMRGCNNFCSYCIVPYTRGRERSREIESILNEVRDLKAKNFREVTLLGQNVNSYRYEQNGRIIRFPDLLAAVAEAVPDMRIRFTSPHPKDMDDEAIAVMARYRNICNHIHLPAQSGSDKMLRVMKRGYTRRWYLDRVAAIRRAIPDCAISSDLFCGFHSETEEDFEATLSLMEEVRYDSAFMFKYSERPGTYAARHLADDVPEEVKLSRLDRMIALQNRLSEESNKRDIGKTFEVLIEGFSKRSREQLFGRTQQNKVVIFDKNGHRVGQYIYVRIKDASSATLFGEVVETPTSE.

The MTTase N-terminal domain occupies 18-136; it reads RKLYIETYGC…LPNLVGAAEQ (119 aa). Residues C27, C63, C100, C174, C178, and C181 each coordinate [4Fe-4S] cluster. The Radical SAM core domain occupies 160 to 392; that stretch reads GGVHINGFVS…IALQNRLSEE (233 aa). Residues 395 to 458 enclose the TRAM domain; the sequence is KRDIGKTFEV…SATLFGEVVE (64 aa).

Belongs to the methylthiotransferase family. MiaB subfamily. Monomer. It depends on [4Fe-4S] cluster as a cofactor.

The protein resides in the cytoplasm. The catalysed reaction is N(6)-dimethylallyladenosine(37) in tRNA + (sulfur carrier)-SH + AH2 + 2 S-adenosyl-L-methionine = 2-methylsulfanyl-N(6)-dimethylallyladenosine(37) in tRNA + (sulfur carrier)-H + 5'-deoxyadenosine + L-methionine + A + S-adenosyl-L-homocysteine + 2 H(+). In terms of biological role, catalyzes the methylthiolation of N6-(dimethylallyl)adenosine (i(6)A), leading to the formation of 2-methylthio-N6-(dimethylallyl)adenosine (ms(2)i(6)A) at position 37 in tRNAs that read codons beginning with uridine. In Porphyromonas gingivalis (strain ATCC BAA-308 / W83), this protein is tRNA-2-methylthio-N(6)-dimethylallyladenosine synthase.